The primary structure comprises 272 residues: Eukaryotic translation initiation factor 3 subunit G (272 aa).

2 disordered regions span residues 1-28 (MPALDEIKSSWADEVELDSGSLPPPTEI) and 157-188 (APTTAKSGKYVPPSMRDSQKPGMGGNPRGRDD). An RRM domain is found at 190 to 268 (TAIRISNLSE…LILNVEWSKP (79 aa)).

It belongs to the eIF-3 subunit G family. As to quaternary structure, component of the eukaryotic translation initiation factor 3 (eIF-3) complex.

It is found in the cytoplasm. Functionally, RNA-binding component of the eukaryotic translation initiation factor 3 (eIF-3) complex, which is involved in protein synthesis of a specialized repertoire of mRNAs and, together with other initiation factors, stimulates binding of mRNA and methionyl-tRNAi to the 40S ribosome. The eIF-3 complex specifically targets and initiates translation of a subset of mRNAs involved in cell proliferation. This subunit can bind 18S rRNA. This Aedes aegypti (Yellowfever mosquito) protein is Eukaryotic translation initiation factor 3 subunit G.